Here is a 441-residue protein sequence, read N- to C-terminus: Synaptotagmin-1 (441 aa).

Over Met1 to Gln69 the chain is Vesicular. Residues Thr70–Ile96 form a helical membrane-spanning segment. At Arg97–Lys441 the chain is on the cytoplasmic side. C2 domains follow at residues Lys159–Lys278 and Ser292–His425. Residues Asp190, Asp196, Asp248, Phe249, Asp250, Ser253, Lys254, Asp256, Asp323, Asp329, Asp383, Asp385, and Asp391 each contribute to the Ca(2+) site.

It belongs to the synaptotagmin family. The cofactor is Ca(2+). As to expression, localized to regions known to be rich in synapses and appears to be associated with synaptic vesicles. Also found in some non-neuronal secretory structures.

The protein resides in the cytoplasmic vesicle. It is found in the secretory vesicle. It localises to the synaptic vesicle membrane. Its subcellular location is the synapse. Functionally, may have a regulatory role in the membrane interactions during trafficking of synaptic vesicles at the active zone of the synapse. It binds acidic phospholipids with a specificity that requires the presence of both an acidic head group and a diacyl backbone. Involved in necrotic cell death. This Caenorhabditis elegans protein is Synaptotagmin-1 (snt-1).